We begin with the raw amino-acid sequence, 364 residues long: Aminomethyltransferase (364 aa).

This sequence belongs to the GcvT family. In terms of assembly, the glycine cleavage system is composed of four proteins: P, T, L and H.

The enzyme catalyses N(6)-[(R)-S(8)-aminomethyldihydrolipoyl]-L-lysyl-[protein] + (6S)-5,6,7,8-tetrahydrofolate = N(6)-[(R)-dihydrolipoyl]-L-lysyl-[protein] + (6R)-5,10-methylene-5,6,7,8-tetrahydrofolate + NH4(+). The glycine cleavage system catalyzes the degradation of glycine. In Enterobacter sp. (strain 638), this protein is Aminomethyltransferase.